Here is a 674-residue protein sequence, read N- to C-terminus: tRNA 5-methylaminomethyl-2-thiouridine biosynthesis bifunctional protein MnmC (674 aa).

Residues 1–248 form a tRNA (mnm(5)s(2)U34)-methyltransferase region; sequence MAASSLPSHN…KREMCFGRYA (248 aa). Residues 276–674 form an FAD-dependent cmnm(5)s(2)U34 oxidoreductase region; that stretch reads IGAGLAGATV…AIRHWRSGKR (399 aa).

It in the N-terminal section; belongs to the methyltransferase superfamily. tRNA (mnm(5)s(2)U34)-methyltransferase family. This sequence in the C-terminal section; belongs to the DAO family. The cofactor is FAD.

Its subcellular location is the cytoplasm. The enzyme catalyses 5-aminomethyl-2-thiouridine(34) in tRNA + S-adenosyl-L-methionine = 5-methylaminomethyl-2-thiouridine(34) in tRNA + S-adenosyl-L-homocysteine + H(+). In terms of biological role, catalyzes the last two steps in the biosynthesis of 5-methylaminomethyl-2-thiouridine (mnm(5)s(2)U) at the wobble position (U34) in tRNA. Catalyzes the FAD-dependent demodification of cmnm(5)s(2)U34 to nm(5)s(2)U34, followed by the transfer of a methyl group from S-adenosyl-L-methionine to nm(5)s(2)U34, to form mnm(5)s(2)U34. This Hydrogenovibrio crunogenus (strain DSM 25203 / XCL-2) (Thiomicrospira crunogena) protein is tRNA 5-methylaminomethyl-2-thiouridine biosynthesis bifunctional protein MnmC.